Here is a 1337-residue protein sequence, read N- to C-terminus: Receptor-type tyrosine-protein phosphatase eta (1337 aa).

The first 35 residues, 1 to 35 (MKPAAREARLPPRSPGLRWALPLLLLLLRLGQILC), serve as a signal peptide directing secretion. Over 36–975 (AGGTPSPIPD…LPQDPGVICG (940 aa)) the chain is Extracellular. Composition is skewed to polar residues over residues 67-82 (SFHK…VETN) and 89-119 (SSGA…STGP). Residues 67 to 124 (SFHKQNGTGTPQVETNTSEDGESSGANDSLRTPEQGSNGTDGASQKTPSSTGPSPVFD) form a disordered region. N-linked (GlcNAc...) asparagine glycosylation is found at Asn72, Asn82, Asn93, Asn104, Asn142, Asn172, Asn192, Asn231, Asn258, Asn278, Asn342, Asn351, Asn376, Asn391, Asn396, Asn413, Asn431, Asn501, Asn525, Asn536, Asn582, Asn603, Asn618, Asn628, Asn637, Asn666, Asn669, Asn761, Asn772, Asn784, Asn790, Asn824, Asn910, and Asn937. 9 Fibronectin type-III domains span residues 121-209 (PVFD…EPIP), 207-291 (PIPV…EGGL), 271-364 (NPYL…EFRT), 368-456 (QVFD…PPVP), 457-541 (VSDF…TVPS), 542-623 (AVFD…TAQY), 625-720 (RPSN…TDPA), 721-817 (SMAS…TDPP), and 816-902 (PPPP…SEVL). A disordered region spans residues 278–327 (NKTKGDPLGTEGGLDASNTERSRAGSPTAPVHDESLVGPVDPSSGQQSRD). A helical membrane pass occupies residues 976-996 (AVFGCIFGALVIVTVGGFIFW). Residues 997–1337 (RKKRKDAKNN…TFGKTNGYIA (341 aa)) lie on the Cytoplasmic side of the membrane. Ser1009 bears the Phosphoserine mark. The 258-residue stretch at 1041–1298 (FAEEYEDLKL…VFLNQCVLDI (258 aa)) folds into the Tyrosine-protein phosphatase domain. Residues Asp1205, 1239-1245 (CSAGVGR), and Gln1283 contribute to the substrate site. Residue Cys1239 is the Phosphocysteine intermediate of the active site.

This sequence belongs to the protein-tyrosine phosphatase family. Receptor class 3 subfamily. As to quaternary structure, monomer. Interacts with CTNNB1 (phosphorylated) and JUP (phosphorylated). Interacts with FLT3 (phosphorylated). Interacts with GAB1 and GRB2. In terms of processing, N- and O-glycosylated. N-glycosylated. In terms of tissue distribution, expressed in the promyelocytic cell line HL-60, the granulocyte-macrophage colony-stimulating factor-dependent leukemic cell line F-36P, and the IL3 and erythropoietin-dependent leukemic cell line F-36E. Expressed predominantly in epithelial cells and lymphocytes. Enhanced expression at high cell density. As to expression, expressed in the brain.

It localises to the cell membrane. The protein resides in the cell projection. Its subcellular location is the ruffle membrane. It is found in the cell junction. The protein localises to the secreted. It localises to the extracellular space. The catalysed reaction is O-phospho-L-tyrosyl-[protein] + H2O = L-tyrosyl-[protein] + phosphate. In terms of biological role, tyrosine phosphatase which dephosphorylates or contributes to the dephosphorylation of CTNND1, FLT3, PDGFRB, MET, KDR, LYN, SRC, MAPK1, MAPK3, EGFR, TJP1, OCLN, PIK3R1 and PIK3R2. Plays a role in cell adhesion, migration, proliferation and differentiation. Has a role in megakaryocytes and platelet formation. Involved in vascular development. Regulator of macrophage adhesion and spreading. Positively affects cell-matrix adhesion. Positive regulator of platelet activation and thrombosis. Negative regulator of cell proliferation. Negative regulator of PDGF-stimulated cell migration; through dephosphorylation of PDGFR. Positive regulator of endothelial cell survival, as well as of VEGF-induced SRC and AKT activation; through KDR dephosphorylation. Negative regulator of EGFR signaling pathway; through EGFR dephosphorylation. Enhances the barrier function of epithelial junctions during reassembly. Negatively regulates T-cell receptor (TCR) signaling. Upon T-cell TCR activation, it is up-regulated and excluded from the immunological synapses, while upon T-cell-antigen presenting cells (APC) disengagement, it is no longer excluded and can dephosphorylate PLCG1 and LAT to down-regulate prolongation of signaling. Functionally, activates angiogenesis and cell migration. Downregulates the expression of the endothelial adhesion molecules ICAM1 and VCAM1. The chain is Receptor-type tyrosine-protein phosphatase eta (PTPRJ) from Homo sapiens (Human).